Consider the following 179-residue polypeptide: ATP-dependent protease subunit HslV (179 aa).

The active site involves Thr7. Residues Gly162, Cys165, and Thr168 each contribute to the Na(+) site.

This sequence belongs to the peptidase T1B family. HslV subfamily. In terms of assembly, a double ring-shaped homohexamer of HslV is capped on each side by a ring-shaped HslU homohexamer. The assembly of the HslU/HslV complex is dependent on binding of ATP.

It localises to the cytoplasm. The catalysed reaction is ATP-dependent cleavage of peptide bonds with broad specificity.. With respect to regulation, allosterically activated by HslU binding. Its function is as follows. Protease subunit of a proteasome-like degradation complex believed to be a general protein degrading machinery. The polypeptide is ATP-dependent protease subunit HslV (Teredinibacter turnerae (strain ATCC 39867 / T7901)).